Reading from the N-terminus, the 147-residue chain is Large ribosomal subunit protein uL13 (147 aa).

It belongs to the universal ribosomal protein uL13 family. Part of the 50S ribosomal subunit.

Functionally, this protein is one of the early assembly proteins of the 50S ribosomal subunit, although it is not seen to bind rRNA by itself. It is important during the early stages of 50S assembly. This Latilactobacillus sakei subsp. sakei (strain 23K) (Lactobacillus sakei subsp. sakei) protein is Large ribosomal subunit protein uL13.